We begin with the raw amino-acid sequence, 159 residues long: Ribosomal RNA large subunit methyltransferase H (159 aa).

S-adenosyl-L-methionine-binding positions include Leu-76, Gly-108, and 127 to 132 (FSKMTF).

The protein belongs to the RNA methyltransferase RlmH family. Homodimer.

It is found in the cytoplasm. It catalyses the reaction pseudouridine(1915) in 23S rRNA + S-adenosyl-L-methionine = N(3)-methylpseudouridine(1915) in 23S rRNA + S-adenosyl-L-homocysteine + H(+). Functionally, specifically methylates the pseudouridine at position 1915 (m3Psi1915) in 23S rRNA. This is Ribosomal RNA large subunit methyltransferase H from Staphylococcus saprophyticus subsp. saprophyticus (strain ATCC 15305 / DSM 20229 / NCIMB 8711 / NCTC 7292 / S-41).